A 275-amino-acid chain; its full sequence is 2,3,4,5-tetrahydropyridine-2,6-dicarboxylate N-succinyltransferase (275 aa).

Positions 106 and 143 each coordinate substrate.

The protein belongs to the transferase hexapeptide repeat family. In terms of assembly, homotrimer.

It localises to the cytoplasm. It catalyses the reaction (S)-2,3,4,5-tetrahydrodipicolinate + succinyl-CoA + H2O = (S)-2-succinylamino-6-oxoheptanedioate + CoA. The protein operates within amino-acid biosynthesis; L-lysine biosynthesis via DAP pathway; LL-2,6-diaminopimelate from (S)-tetrahydrodipicolinate (succinylase route): step 1/3. The protein is 2,3,4,5-tetrahydropyridine-2,6-dicarboxylate N-succinyltransferase of Cupriavidus pinatubonensis (strain JMP 134 / LMG 1197) (Cupriavidus necator (strain JMP 134)).